The primary structure comprises 256 residues: Small ribosomal subunit protein eS1 (256 aa).

Position 2 is an N-acetylalanine; partial (Ala2).

It belongs to the eukaryotic ribosomal protein eS1 family. As to quaternary structure, component of the small ribosomal subunit. Mature ribosomes consist of a small (40S) and a large (60S) subunit. The 40S subunit contains about 33 different proteins and 1 molecule of RNA (18S). The 60S subunit contains about 49 different proteins and 3 molecules of RNA (25S, 5.8S and 5S).

The protein resides in the cytoplasm. In Sclerotinia sclerotiorum (strain ATCC 18683 / 1980 / Ss-1) (White mold), this protein is Small ribosomal subunit protein eS1 (rps1).